We begin with the raw amino-acid sequence, 215 residues long: Somatotropin (215 aa).

A signal peptide spans 1-25 (MAPGARISLLLLITFTLLGPQRSGA). A Zn(2+)-binding site is contributed by H44. A disulfide bond links C77 and C188. Phosphoserine is present on S130. E197 contributes to the Zn(2+) binding site. C205 and C213 are disulfide-bonded.

This sequence belongs to the somatotropin/prolactin family.

The protein resides in the secreted. In terms of biological role, plays an important role in growth control. Its major role in stimulating body growth is to stimulate the liver and other tissues to secrete IGF1. It stimulates both the differentiation and proliferation of myoblasts. It also stimulates amino acid uptake and protein synthesis in muscle and other tissues. This is Somatotropin (GH1) from Trichosurus vulpecula (Brush-tailed possum).